The sequence spans 206 residues: Sec-independent protein translocase protein TatB (206 aa).

The helical transmembrane segment at 1 to 21 threads the bilayer; sequence MFDIGWTELLVIAVVLIVVVG. Residues 104 to 206 form a disordered region; the sequence is ENKTEVPSAA…VQTKKKKDEA (103 aa). Low complexity predominate over residues 110–124; it reads PSAAMSAPTPSMSLP. The segment covering 125 to 138 has biased composition (pro residues); it reads ETPPVVPTPAPAPE. Composition is skewed to low complexity over residues 139-151 and 187-196; these read PAAVAAETVAAKP and ARKPAAPKTP.

It belongs to the TatB family. The Tat system comprises two distinct complexes: a TatABC complex, containing multiple copies of TatA, TatB and TatC subunits, and a separate TatA complex, containing only TatA subunits. Substrates initially bind to the TatABC complex, which probably triggers association of the separate TatA complex to form the active translocon.

It localises to the cell inner membrane. Functionally, part of the twin-arginine translocation (Tat) system that transports large folded proteins containing a characteristic twin-arginine motif in their signal peptide across membranes. Together with TatC, TatB is part of a receptor directly interacting with Tat signal peptides. TatB may form an oligomeric binding site that transiently accommodates folded Tat precursor proteins before their translocation. The polypeptide is Sec-independent protein translocase protein TatB (Rhizobium etli (strain ATCC 51251 / DSM 11541 / JCM 21823 / NBRC 15573 / CFN 42)).